We begin with the raw amino-acid sequence, 264 residues long: Thymidylate synthase (264 aa).

Position 21 (Arg21) interacts with dUMP. His51 lines the (6R)-5,10-methylene-5,6,7,8-tetrahydrofolate pocket. A dUMP-binding site is contributed by Arg126–Arg127. Catalysis depends on Cys146, which acts as the Nucleophile. Residues Arg166–Asp169, Asn177, and His207–Tyr209 contribute to the dUMP site. Asp169 lines the (6R)-5,10-methylene-5,6,7,8-tetrahydrofolate pocket. Residue Ala263 participates in (6R)-5,10-methylene-5,6,7,8-tetrahydrofolate binding.

This sequence belongs to the thymidylate synthase family. Bacterial-type ThyA subfamily. Homodimer.

The protein localises to the cytoplasm. It catalyses the reaction dUMP + (6R)-5,10-methylene-5,6,7,8-tetrahydrofolate = 7,8-dihydrofolate + dTMP. The protein operates within pyrimidine metabolism; dTTP biosynthesis. Its function is as follows. Catalyzes the reductive methylation of 2'-deoxyuridine-5'-monophosphate (dUMP) to 2'-deoxythymidine-5'-monophosphate (dTMP) while utilizing 5,10-methylenetetrahydrofolate (mTHF) as the methyl donor and reductant in the reaction, yielding dihydrofolate (DHF) as a by-product. This enzymatic reaction provides an intracellular de novo source of dTMP, an essential precursor for DNA biosynthesis. This chain is Thymidylate synthase, found in Sodalis glossinidius (strain morsitans).